The sequence spans 153 residues: Lipoprotein signal peptidase (153 aa).

3 consecutive transmembrane segments (helical) span residues 11 to 31, 39 to 59, and 68 to 88; these read ILIL…SLFV, DCID…FAFL, and LVLV…CYAI. Residues Asp112 and Asp129 contribute to the active site. The chain crosses the membrane as a helical span at residues 122-142; that stretch reads FAVFNFADVMIDVAVVWILLL.

This sequence belongs to the peptidase A8 family.

The protein localises to the cell inner membrane. The enzyme catalyses Release of signal peptides from bacterial membrane prolipoproteins. Hydrolyzes -Xaa-Yaa-Zaa-|-(S,diacylglyceryl)Cys-, in which Xaa is hydrophobic (preferably Leu), and Yaa (Ala or Ser) and Zaa (Gly or Ala) have small, neutral side chains.. The protein operates within protein modification; lipoprotein biosynthesis (signal peptide cleavage). In terms of biological role, this protein specifically catalyzes the removal of signal peptides from prolipoproteins. This chain is Lipoprotein signal peptidase, found in Sulfurimonas denitrificans (strain ATCC 33889 / DSM 1251) (Thiomicrospira denitrificans (strain ATCC 33889 / DSM 1251)).